The following is a 339-amino-acid chain: UDP-glucose 4-epimerase (339 aa).

NAD(+)-binding positions include 12 to 13 (FI), 32 to 37 (DNLCNS), 59 to 60 (DI), 81 to 85 (FAGLK), N100, S125, Y150, K154, and F179. Positions 125 and 150 each coordinate substrate. Y150 (proton acceptor) is an active-site residue. Residues N180, 200-201 (NL), 217-219 (AVF), R232, and 293-296 (RAGD) contribute to the substrate site.

The protein belongs to the NAD(P)-dependent epimerase/dehydratase family. In terms of assembly, homodimer. Requires NAD(+) as cofactor.

It carries out the reaction UDP-alpha-D-glucose = UDP-alpha-D-galactose. The protein operates within carbohydrate metabolism; galactose metabolism. Its function is as follows. Involved in the metabolism of galactose. Plays an essential role in the incorporation of galactose into meningococcal lipopolysaccharide surface molecules, which are important for pathogenesis. Catalyzes the conversion of UDP-galactose (UDP-Gal) to UDP-glucose (UDP-Glc) through a mechanism involving the transient reduction of NAD. This chain is UDP-glucose 4-epimerase (galE), found in Neisseria meningitidis serogroup B (strain ATCC BAA-335 / MC58).